The following is an 808-amino-acid chain: Phospholipase D alpha 1 (808 aa).

The 125-residue stretch at 1–125 (MAHYLMHGTL…IRGDQVDRWV (125 aa)) folds into the C2 domain. D186 is a Ca(2+) binding site. A PLD phosphodiesterase 1 domain is found at 326–364 (TMFTHHQKIVVVDGEMPSGESQMRRIVSFVGGIDLCDGR). Residues H331, K333, and D338 contribute to the active site. Position 331 (H331) interacts with a 1,2-diacyl-sn-glycero-3-phosphate. The Ca(2+) site is built by H370 and H404. The a 1,2-diacyl-sn-glycero-3-phosphate site is built by Q520 and H659. A PLD phosphodiesterase 2 domain is found at 654–681 (FMIYVHTKMMIVDDEYIIVGSANINQRS). Active-site residues include H659, K661, and D666. E720 contributes to the Ca(2+) binding site.

The protein belongs to the phospholipase D family. C2-PLD subfamily. Ca(2+) is required as a cofactor.

The catalysed reaction is a 1,2-diacyl-sn-glycero-3-phosphocholine + H2O = a 1,2-diacyl-sn-glycero-3-phosphate + choline + H(+). Functionally, hydrolyzes glycerol-phospholipids at the terminal phosphodiesteric bond. Plays an important role in various cellular processes. The polypeptide is Phospholipase D alpha 1 (Carica papaya (Papaya)).